The sequence spans 151 residues: Caveolin-3 (151 aa).

Residues Met1–Pro83 are Cytoplasmic-facing. Lys38 participates in a covalent cross-link: Glycyl lysine isopeptide (Lys-Gly) (interchain with G-Cter in SUMO3). Residues Thr64–Ile114 form a required for interaction with DAG1 region. An intramembrane region (helical) is located at residues Leu84–Val104. At Pro105–Val151 the chain is on the cytoplasmic side.

This sequence belongs to the caveolin family. As to quaternary structure, homooligomer. Interacts with DLG1 and KCNA5; forms a ternary complex. Interacts with TRIM72. Interacts with MUSK; may regulate MUSK signaling. Interacts with DAG1 (via its C-terminal); the interaction prevents binding of DAG1 with DMD. Interacts with DYSF. Interacts with POPDC1. Interacts with CAVIN1 and CAVIN2. Interacts with CAVIN4. Post-translationally, sumoylation with SUMO3 by PIAS4 may reduce agonist-induced internalization and desensitization of adrenergic receptor ABRD2. As to expression, expressed predominantly in muscle.

It localises to the golgi apparatus membrane. The protein localises to the cell membrane. It is found in the membrane. Its subcellular location is the caveola. The protein resides in the sarcolemma. Its function is as follows. May act as a scaffolding protein within caveolar membranes. Interacts directly with G-protein alpha subunits and can functionally regulate their activity. May also regulate voltage-gated potassium channels. Plays a role in the sarcolemma repair mechanism of both skeletal muscle and cardiomyocytes that permits rapid resealing of membranes disrupted by mechanical stress. Mediates the recruitment of CAVIN2 and CAVIN3 proteins to the caveolae. The polypeptide is Caveolin-3 (CAV3) (Homo sapiens (Human)).